Here is a 703-residue protein sequence, read N- to C-terminus: Polyribonucleotide nucleotidyltransferase (703 aa).

Mg(2+) is bound by residues Asp-484 and Asp-490. One can recognise a KH domain in the interval Pro-551–Val-610. The S1 motif domain maps to Gly-620–Lys-694.

It belongs to the polyribonucleotide nucleotidyltransferase family. It depends on Mg(2+) as a cofactor.

The protein resides in the cytoplasm. The enzyme catalyses RNA(n+1) + phosphate = RNA(n) + a ribonucleoside 5'-diphosphate. Functionally, involved in mRNA degradation. Catalyzes the phosphorolysis of single-stranded polyribonucleotides processively in the 3'- to 5'-direction. In Syntrophomonas wolfei subsp. wolfei (strain DSM 2245B / Goettingen), this protein is Polyribonucleotide nucleotidyltransferase.